The sequence spans 116 residues: Large ribosomal subunit protein bL17 (116 aa).

The protein belongs to the bacterial ribosomal protein bL17 family. As to quaternary structure, part of the 50S ribosomal subunit. Contacts protein L32.

The chain is Large ribosomal subunit protein bL17 from Helicobacter pylori (strain G27).